A 90-amino-acid chain; its full sequence is UPF0213 protein lin0209 (90 aa).

The GIY-YIG domain maps to 5–80 (NEHFFYVLKC…KKLSRKNKDS (76 aa)).

Belongs to the UPF0213 family.

This Listeria innocua serovar 6a (strain ATCC BAA-680 / CLIP 11262) protein is UPF0213 protein lin0209.